A 104-amino-acid chain; its full sequence is Large ribosomal subunit protein bL21 (104 aa).

Belongs to the bacterial ribosomal protein bL21 family. As to quaternary structure, part of the 50S ribosomal subunit. Contacts protein L20.

In terms of biological role, this protein binds to 23S rRNA in the presence of protein L20. The polypeptide is Large ribosomal subunit protein bL21 (Helicobacter pylori (strain Shi470)).